We begin with the raw amino-acid sequence, 146 residues long: Benzoylsuccinyl-CoA thiolase subunit BbsA (146 aa).

C42, C45, C55, and C58 together coordinate Zn(2+).

This sequence belongs to the BbsA family. As to quaternary structure, heterotetramer composed of two BbsA subunits and two BbsB subunits. Both BbsA and BbsB are essential for enzymatic activity.

It catalyses the reaction (S)-2-benzoylsuccinyl-CoA + CoA = benzoyl-CoA + succinyl-CoA. Its pathway is xenobiotic degradation; toluene degradation. Functionally, component of the BbsAB thiolase complex, which catalyzes the thiolytic cleavage of (S)-2-benzoylsuccinyl-CoA to succinyl-CoA and benzoyl-CoA, the final step of anaerobic toluene metabolism. The BbsA subunit critically contributes to an induced-fit process for productive binding of a CoA substrate into the active site of BbsB. In Geobacter metallireducens (strain ATCC 53774 / DSM 7210 / GS-15), this protein is Benzoylsuccinyl-CoA thiolase subunit BbsA.